A 106-amino-acid chain; its full sequence is Ferredoxin (106 aa).

[3Fe-4S] cluster is bound by residues C8 and C16. [4Fe-4S] cluster-binding residues include C20, C39, C42, and C45. The 30-residue stretch at 30–59 (RMLYIHPDECVDCGACEPVCPVEAIYYEDD) folds into the 4Fe-4S ferredoxin-type domain. Position 49 (C49) interacts with [3Fe-4S] cluster. A disordered region spans residues 81 to 106 (PGGASKVGQTDNDPQAIKDLPPQGED).

[4Fe-4S] cluster serves as cofactor. The cofactor is [3Fe-4S] cluster.

Ferredoxins are iron-sulfur proteins that transfer electrons in a wide variety of metabolic reactions. The polypeptide is Ferredoxin (fdxA) (Mycolicibacterium smegmatis (Mycobacterium smegmatis)).